A 1360-amino-acid polypeptide reads, in one-letter code: DNA-directed RNA polymerase subunit beta (1360 aa).

Belongs to the RNA polymerase beta chain family. In terms of assembly, the RNAP catalytic core consists of 2 alpha, 1 beta, 1 beta' and 1 omega subunit. When a sigma factor is associated with the core the holoenzyme is formed, which can initiate transcription.

The catalysed reaction is RNA(n) + a ribonucleoside 5'-triphosphate = RNA(n+1) + diphosphate. Its function is as follows. DNA-dependent RNA polymerase catalyzes the transcription of DNA into RNA using the four ribonucleoside triphosphates as substrates. The chain is DNA-directed RNA polymerase subunit beta from Ruthia magnifica subsp. Calyptogena magnifica.